The primary structure comprises 277 residues: Putative pyruvate, phosphate dikinase regulatory protein (277 aa).

Residue 151-158 (GISRTSKT) participates in ADP binding.

Belongs to the pyruvate, phosphate/water dikinase regulatory protein family. PDRP subfamily.

The enzyme catalyses N(tele)-phospho-L-histidyl/L-threonyl-[pyruvate, phosphate dikinase] + ADP = N(tele)-phospho-L-histidyl/O-phospho-L-threonyl-[pyruvate, phosphate dikinase] + AMP + H(+). The catalysed reaction is N(tele)-phospho-L-histidyl/O-phospho-L-threonyl-[pyruvate, phosphate dikinase] + phosphate + H(+) = N(tele)-phospho-L-histidyl/L-threonyl-[pyruvate, phosphate dikinase] + diphosphate. In terms of biological role, bifunctional serine/threonine kinase and phosphorylase involved in the regulation of the pyruvate, phosphate dikinase (PPDK) by catalyzing its phosphorylation/dephosphorylation. This is Putative pyruvate, phosphate dikinase regulatory protein from Alkaliphilus metalliredigens (strain QYMF).